The following is a 463-amino-acid chain: Chaperone SurA (463 aa).

Positions methionine 1–alanine 25 are cleaved as a signal peptide. 2 consecutive PpiC domains span residues glycine 174 to glutamate 276 and valine 289 to glycine 388. 2 disordered regions span residues alanine 329–glycine 348 and tyrosine 431–arginine 463. The span at alanine 441–aspartate 450 shows a compositional bias: low complexity. Positions proline 451–arginine 463 are enriched in pro residues.

Its subcellular location is the periplasm. The catalysed reaction is [protein]-peptidylproline (omega=180) = [protein]-peptidylproline (omega=0). Chaperone involved in the correct folding and assembly of outer membrane proteins. Recognizes specific patterns of aromatic residues and the orientation of their side chains, which are found more frequently in integral outer membrane proteins. May act in both early periplasmic and late outer membrane-associated steps of protein maturation. The sequence is that of Chaperone SurA from Xanthomonas axonopodis pv. citri (strain 306).